Reading from the N-terminus, the 234-residue chain is Purine nucleoside phosphorylase DeoD-type (234 aa).

His-4 is a binding site for a purine D-ribonucleoside. Phosphate contacts are provided by residues Gly-20, Arg-24, Arg-43, and 87–90; that span reads RIGS. A purine D-ribonucleoside-binding positions include Glu-162, 179 to 181, and 203 to 204; these read EME and SD. Asp-204 serves as the catalytic Proton donor.

The protein belongs to the PNP/UDP phosphorylase family. Homohexamer; trimer of homodimers.

It catalyses the reaction a purine D-ribonucleoside + phosphate = a purine nucleobase + alpha-D-ribose 1-phosphate. The catalysed reaction is a purine 2'-deoxy-D-ribonucleoside + phosphate = a purine nucleobase + 2-deoxy-alpha-D-ribose 1-phosphate. Functionally, catalyzes the reversible phosphorolytic breakdown of the N-glycosidic bond in the beta-(deoxy)ribonucleoside molecules, with the formation of the corresponding free purine bases and pentose-1-phosphate. The polypeptide is Purine nucleoside phosphorylase DeoD-type (Jannaschia sp. (strain CCS1)).